A 721-amino-acid chain; its full sequence is Photosystem I P700 chlorophyll a apoprotein A1 (721 aa).

The next 8 helical transmembrane spans lie at 61 to 84, 147 to 170, 186 to 210, 282 to 300, 337 to 360, 376 to 402, 424 to 446, and 522 to 540; these read VFSAHFGQLAIILIWLSGMYFHGA, LYCTAIGALIFAALMLFAGWFHYH, LNHHLAGLLGLGSLSWAGHQVHVSL, TAHHHLAIAILFLIAGHMY, WHAQLALNLAMLGSLTIVVAHHMY, LSLFTHHMWIRGFLIVGAAAHAAIFMV, AIVSHLNWACIFLGFHSFGLYIH, and FLVHHIHAFTIHVTVLILL. 2 residues coordinate [4Fe-4S] cluster: Cys-564 and Cys-573. The next 2 membrane-spanning stretches (helical) occupy residues 580–601 and 655–677; these read HVFLGLFWMYNAISVVIFHFSW and LSAYGLFFLGAHFVWAFSLMFLF. Residue His-666 participates in chlorophyll a' binding. Chlorophyll a is bound by residues Met-674 and Tyr-682. Trp-683 is a phylloquinone binding site. Residues 715-721 form a helical membrane-spanning segment; it reads AVGVAHY.

Belongs to the PsaA/PsaB family. In terms of assembly, the PsaA/B heterodimer binds the P700 chlorophyll special pair and subsequent electron acceptors. PSI consists of a core antenna complex that captures photons, and an electron transfer chain that converts photonic excitation into a charge separation. The eukaryotic PSI reaction center is composed of at least 11 subunits. P700 is a chlorophyll a/chlorophyll a' dimer, A0 is one or more chlorophyll a, A1 is one or both phylloquinones and FX is a shared 4Fe-4S iron-sulfur center. is required as a cofactor.

It localises to the plastid. The protein localises to the chloroplast thylakoid membrane. It catalyses the reaction reduced [plastocyanin] + hnu + oxidized [2Fe-2S]-[ferredoxin] = oxidized [plastocyanin] + reduced [2Fe-2S]-[ferredoxin]. In terms of biological role, psaA and PsaB bind P700, the primary electron donor of photosystem I (PSI), as well as the electron acceptors A0, A1 and FX. PSI is a plastocyanin-ferredoxin oxidoreductase, converting photonic excitation into a charge separation, which transfers an electron from the donor P700 chlorophyll pair to the spectroscopically characterized acceptors A0, A1, FX, FA and FB in turn. Oxidized P700 is reduced on the lumenal side of the thylakoid membrane by plastocyanin. This chain is Photosystem I P700 chlorophyll a apoprotein A1, found in Ginkgo biloba (Ginkgo).